We begin with the raw amino-acid sequence, 325 residues long: L-lactate dehydrogenase (325 aa).

NAD(+) is bound by residues Val19, Asp40, Lys45, Tyr70, and 84–85; that span reads GA. Positions 87 and 93 each coordinate substrate. NAD(+) is bound by residues Thr106, 123–125, and Ser148; that span reads AAN. 125–128 contacts substrate; the sequence is NPVD. Residue 153–156 participates in substrate binding; that stretch reads DSAR. Arg158 and His173 together coordinate beta-D-fructose 1,6-bisphosphate. His180 functions as the Proton acceptor in the catalytic mechanism. Position 225 is a phosphotyrosine (Tyr225). Thr234 is a binding site for substrate.

The protein belongs to the LDH/MDH superfamily. LDH family. Homotetramer.

It localises to the cytoplasm. It catalyses the reaction (S)-lactate + NAD(+) = pyruvate + NADH + H(+). It functions in the pathway fermentation; pyruvate fermentation to lactate; (S)-lactate from pyruvate: step 1/1. Its activity is regulated as follows. Allosterically activated by fructose 1,6-bisphosphate (FBP). Catalyzes the conversion of lactate to pyruvate. This is L-lactate dehydrogenase from Latilactobacillus sakei subsp. sakei (strain 23K) (Lactobacillus sakei subsp. sakei).